A 635-amino-acid chain; its full sequence is ADP-ribosylation factor-binding protein GGA1 (635 aa).

Met1 carries the N-acetylmethionine modification. Residues Ala17 to Ser147 form the VHS domain. The tract at residues Lys114–Asp273 is interaction with ARF3. A GAT domain is found at Asp171–Arg298. Residue Ser185 is modified to Phosphoserine. The segment at Gly299–Pro505 is unstructured hinge. Residues Asp305 to Leu349 are disordered. A compositionally biased stretch (low complexity) spans Gly313–Asp325. The residue at position 354 (Ser354) is a Phosphoserine. The Autoinhibitory motif lies at Asp357–Met361. Disordered regions lie at residues Ser362–Leu422 and Arg455–Glu490. Positions Asn383–Ser393 are enriched in polar residues. A Phosphoserine modification is found at Ser417. Positions Ser459–Ser476 are enriched in low complexity. Residues Pro477–Ala486 are compositionally biased toward pro residues. The 122-residue stretch at Ser506–Pro627 folds into the GAE domain.

The protein belongs to the GGA protein family. Monomer. Interacts with GGA2 and GGA3. Binds to clathrin and activated ARFs, including ARF1, ARF5 and ARF6. Interacts with RABEP1 and RABGEF1. Interacts with the type-I membrane proteins LRP3, M6PR/CD-MPR and IGF2R/CI-MPR. Interacts (via N-terminal VHS domain) with SORL1/sorLA and SORT1 (via C-terminal cytosolic domain). Interacts with EPN4. Interacts with CCDC91. Interacts with HEATR5B/p200a. Interacts with SYNRG/gamma-synergin. Interacts (via GAE doamin) with NECAP1 and NECAP2. Interacts (via GAE domain) with AFTPH/aftiphilin. Interacts with TSG101 and UBC. Interacts with RNF11. Interacts (via VHS domain) with BACE1 (via DXXLL motif); the interaction highly increases when BACE1 is phosphorylated at 'Ser-498'. Interacts with CNST. Interacts with ADRA2B. Interacts with ARL3; the interaction recruits, in collaboration with RABEP1, PKD1:PKD2 complex to trans-Golgi network and is required for ciliary targeting. Post-translationally, phosphorylated by CK2 and dephosphorylated by PP2A. Phosphorylation of GGA1 allows the internal DXXLL motif to bind the VHS domain and to inhibit the recognition of cargo signals. Ubiquitinated.

Its subcellular location is the golgi apparatus. The protein localises to the trans-Golgi network membrane. The protein resides in the endosome membrane. It localises to the early endosome membrane. Plays a role in protein sorting and trafficking between the trans-Golgi network (TGN) and endosomes. Mediates the ARF-dependent recruitment of clathrin to the TGN and binds ubiquitinated proteins and membrane cargo molecules with a cytosolic acidic cluster-dileucine (DXXLL) motif. Mediates export of the GPCR receptor ADRA2B to the cell surface. Required for targeting PKD1:PKD2 complex from the trans-Golgi network to the cilium membrane. Regulates retrograde transport of proteins such as phosphorylated form of BACE1 from endosomes to the trans-Golgi network. In Mus musculus (Mouse), this protein is ADP-ribosylation factor-binding protein GGA1 (Gga1).